Consider the following 267-residue polypeptide: Chaperone protein MyfB (267 aa).

Residues 1-34 (MKYKFSHNFISYNLFLFVFMSLILLPYSHASSMG) form the signal peptide. A disulfide bond links Cys127 and Cys164.

Belongs to the periplasmic pilus chaperone family.

The protein resides in the periplasm. Required for the biogenesis of the MyfA fimbria. This is Chaperone protein MyfB (myfB) from Yersinia enterocolitica.